The sequence spans 994 residues: Glutamate [NMDA] receptor subunit 1 (994 aa).

An N-terminal signal peptide occupies residues 1–23 (MAADGFVYRWLLFGTTIVLLAEA). Residues 24 to 570 (AQRHTASDNP…TLVSFLQPFS (547 aa)) lie on the Extracellular side of the membrane. N-linked (GlcNAc...) asparagine glycosylation is found at asparagine 255, asparagine 311, asparagine 342, asparagine 394, asparagine 451, asparagine 478, and asparagine 498. Residues 527–529 (PLT) and arginine 534 each bind glycine. Residues 571 to 591 (NTLWILVMVSVHVVALVLYLL) traverse the membrane as a helical segment. Residues 592–648 (DRFSPFGRFKLSHSDSNEEKALNLSSAVWFAWGVLLNSGIGEGTPRSFSARVLGMVW) lie on the Cytoplasmic side of the membrane. Residues 649-669 (AGFAMIIVASYTANLAAFLVL) traverse the membrane as a helical segment. Residues 670-828 (ERPKTKLSGI…KTPNTLGLKN (159 aa)) are Extracellular-facing. A glycan (N-linked (GlcNAc...) asparagine) is linked at asparagine 690. Serine 700 and aspartate 744 together coordinate glycine. A helical transmembrane segment spans residues 829–849 (MAGVFILVGVGIAGGVGLIII). Over 850 to 994 (EVIYKKHQVK…YTSDVSHLVV (145 aa)) the chain is Cytoplasmic. Residues 971–994 (RPQQNMLPPRYSPGYTSDVSHLVV) are disordered. The span at 984 to 994 (GYTSDVSHLVV) shows a compositional bias: polar residues.

This sequence belongs to the glutamate-gated ion channel (TC 1.A.10.1) family. As to quaternary structure, forms a heteromeric NMDA channel with Nmdar2.

The protein resides in the cell membrane. It is found in the postsynaptic cell membrane. The protein localises to the postsynaptic density. In terms of biological role, NMDA receptor subtype of glutamate-gated ion channels with high calcium permeability and voltage-dependent sensitivity to magnesium. Mediated by glycine. This protein plays a key role in synaptic plasticity, synaptogenesis, excitotoxicity, memory acquisition and learning. It mediates neuronal functions in glutamate neurotransmission. Is involved in the cell surface targeting of NMDA receptors. Plays a role in associative learning and in long-term memory consolidation. The sequence is that of Glutamate [NMDA] receptor subunit 1 from Drosophila ananassae (Fruit fly).